The primary structure comprises 569 residues: ABC1 family protein MCP2 (569 aa).

A mitochondrion-targeting transit peptide spans 1–18; that stretch reads MMTKAFFNKLPFEVFRRY. The Mitochondrial matrix segment spans residues 19–34; sequence VRTGKSIPQRSPRTRK. Residues 35–51 traverse the membrane as a helical segment; sequence SLLVGGTIASAVVLYNF. The Mitochondrial intermembrane segment spans residues 52–569; the sequence is NDTFHDSVKH…KFIPKTWLSS (518 aa).

The protein belongs to the protein kinase superfamily. ADCK protein kinase family.

The protein localises to the mitochondrion. Its subcellular location is the mitochondrion inner membrane. In terms of biological role, component of MIOREX complexes, large expressome-like assemblies of ribosomes with factors involved in all the steps of post-transcriptional gene expression. Involved in mitochondrial lipid homeostasis. This Saccharomyces cerevisiae (strain ATCC 204508 / S288c) (Baker's yeast) protein is ABC1 family protein MCP2.